A 354-amino-acid chain; its full sequence is Trans-L-3-hydroxyproline dehydratase (354 aa).

Residue C104 is the Proton acceptor of the active site. Substrate contacts are provided by residues G105–H106, D269, and G274–S275.

This sequence belongs to the proline racemase family. As to quaternary structure, homodimer.

It carries out the reaction trans-3-hydroxy-L-proline = 1-pyrroline-2-carboxylate + H2O. In terms of biological role, catalyzes the dehydration of trans-3-hydroxy-L-proline to delta-1-pyrroline-2-carboxylate (Pyr2C). The protein is Trans-L-3-hydroxyproline dehydratase (L3hypdh) of Mus musculus (Mouse).